A 219-amino-acid chain; its full sequence is Chloramphenicol acetyltransferase (219 aa).

H193 (proton acceptor) is an active-site residue.

This sequence belongs to the chloramphenicol acetyltransferase family. Homotrimer.

It carries out the reaction chloramphenicol + acetyl-CoA = chloramphenicol 3-acetate + CoA. In terms of biological role, this enzyme is an effector of chloramphenicol resistance in bacteria. This is Chloramphenicol acetyltransferase (cat) from Klebsiella sp.